A 655-amino-acid chain; its full sequence is SRSF protein kinase 1 (655 aa).

A disordered region spans residues 1–57 (MERKVLALQARKKRTKAKKDKAQRKSETQHRGSAPHSESDLPEQEEEILGSDDDEQE). The span at 10 to 22 (ARKKRTKAKKDKA) shows a compositional bias: basic residues. Residues 40-57 (DLPEQEEEILGSDDDEQE) show a composition bias toward acidic residues. The residue at position 51 (Ser51) is a Phosphoserine; by CK2. Residues 80 to 653 (YHVIRKLGWG…AAECLRHPWL (574 aa)) enclose the Protein kinase domain. Residues 86–94 (LGWGHFSTV), Lys109, and 166–168 (EVL) each bind ATP. Asp213 functions as the Proton acceptor in the catalytic mechanism. Disordered stretches follow at residues 238–341 (WQRS…QDQT) and 397–417 (FLSS…CTPI). Positions 265-276 (KNKKKKLKKKQK) are enriched in basic residues. Basic and acidic residues-rich tracts occupy residues 277-288 (RQAELLEKRMQE) and 304-318 (NKQE…RPLK). Ser309, Ser311, and Ser333 each carry phosphoserine. A Phosphoserine; by CK2 modification is found at Ser555.

This sequence belongs to the protein kinase superfamily. CMGC Ser/Thr protein kinase family. As to quaternary structure, monomer. Isoform 2 is found in a multisubunit complex containing seven proteins, named toposome, which separates entangled circular chromatin DNA during chromosome segregation. Isoform 2 interacts with DNAJC8 and AHSA1/AHA1 and this mediates formation of a complex with the Hsp70 /Hsp90 machinery. Isoform 1 is found in a complex with: DHX9, MOV10, MATR3, HNRNPU, NCL, DDX21, HSD17B4, PABPC1, HNRNPM, IGF2BP1, SYNCRIP, RPL3, VIM, YBX1, NPM1, HNRNPA2B1, HNRNPC, RPLP0, RPL7A and RALY. Isoform 2 binds to IGF2BP1, SYNCRIP, HNRNPA2B1 and HNRNPC. Isoform 1 and isoform 2 interact with SAFB which inhibits its activity. Isoform 2 interacts with SAFB2 which inhibits its activity. (Microbial infection) Isoform 2 interacts with HHV-1 ICP27 protein. Requires Mg(2+) as cofactor. As to expression, isoform 2 is predominantly expressed in the testis but is also present at lower levels in heart, ovary, small intestine, liver, kidney, pancreas and skeletal muscle. Isoform 1 is only seen in the testis, at lower levels than isoform 2. Highly expressed in different erythroid and lymphoid cell lines, with isoform 2 being far more abundant than isoform 1.

The protein localises to the cytoplasm. Its subcellular location is the nucleus. It localises to the nucleus matrix. The protein resides in the microsome. It is found in the nucleoplasm. The protein localises to the nucleus speckle. Its subcellular location is the chromosome. The catalysed reaction is L-seryl-[protein] + ATP = O-phospho-L-seryl-[protein] + ADP + H(+). The enzyme catalyses L-threonyl-[protein] + ATP = O-phospho-L-threonyl-[protein] + ADP + H(+). With respect to regulation, activated by phosphorylation on Ser-51 and Ser-555. Functionally, serine/arginine-rich protein-specific kinase which specifically phosphorylates its substrates at serine residues located in regions rich in arginine/serine dipeptides, known as RS domains and is involved in the phosphorylation of SR splicing factors and the regulation of splicing. Plays a central role in the regulatory network for splicing, controlling the intranuclear distribution of splicing factors in interphase cells and the reorganization of nuclear speckles during mitosis. Can influence additional steps of mRNA maturation, as well as other cellular activities, such as chromatin reorganization in somatic and sperm cells and cell cycle progression. Isoform 2 phosphorylates SFRS2, ZRSR2, LBR and PRM1. Isoform 2 phosphorylates SRSF1 using a directional (C-terminal to N-terminal) and a dual-track mechanism incorporating both processive phosphorylation (in which the kinase stays attached to the substrate after each round of phosphorylation) and distributive phosphorylation steps (in which the kinase and substrate dissociate after each phosphorylation event). The RS domain of SRSF1 binds first to a docking groove in the large lobe of the kinase domain of SRPK1. This induces certain structural changes in SRPK1 and/or RRM2 domain of SRSF1, allowing RRM2 to bind the kinase and initiate phosphorylation. The cycles continue for several phosphorylation steps in a processive manner (steps 1-8) until the last few phosphorylation steps (approximately steps 9-12). During that time, a mechanical stress induces the unfolding of the beta-4 motif in RRM2, which then docks at the docking groove of SRPK1. This also signals RRM2 to begin to dissociate, which facilitates SRSF1 dissociation after phosphorylation is completed. Isoform 2 can mediate hepatitis B virus (HBV) core protein phosphorylation. It plays a negative role in the regulation of HBV replication through a mechanism not involving the phosphorylation of the core protein but by reducing the packaging efficiency of the pregenomic RNA (pgRNA) without affecting the formation of the viral core particles. Isoform 1 and isoform 2 can induce splicing of exon 10 in MAPT/TAU. The ratio of isoform 1/isoform 2 plays a decisive role in determining cell fate in K-562 leukaemic cell line: isoform 2 favors proliferation where as isoform 1 favors differentiation. In Homo sapiens (Human), this protein is SRSF protein kinase 1.